Reading from the N-terminus, the 84-residue chain is Anaphase-promoting complex subunit 11 (84 aa).

Zn(2+)-binding residues include Cys23, Cys26, Cys34, Cys37, Cys44, Cys51, His53, His56, His58, Cys59, Cys73, and Cys76. The segment at 34–77 (CPDCKVPGDDCPLVWGQCSHCFHMHCILKWLNAQQVQQHCPMCR) adopts an RING-type zinc-finger fold.

The protein belongs to the RING-box family. The mammalian APC/C is composed at least of 14 distinct subunits ANAPC1, ANAPC2, CDC27/APC3, ANAPC4, ANAPC5, CDC16/APC6, ANAPC7, CDC23/APC8, ANAPC10, ANAPC11, CDC26/APC12, ANAPC13, ANAPC15 and ANAPC16 that assemble into a complex of at least 19 chains with a combined molecular mass of around 1.2 MDa; APC/C interacts with FZR1 and FBXO5. Interacts with the cullin domain of ANAPC2. Interacts with UBE2D2. Post-translationally, auto-ubiquitinated.

Its subcellular location is the cytoplasm. It localises to the nucleus. It participates in protein modification; protein ubiquitination. Functionally, together with the cullin protein ANAPC2, constitutes the catalytic component of the anaphase promoting complex/cyclosome (APC/C), a cell cycle-regulated E3 ubiquitin ligase that controls progression through mitosis and the G1 phase of the cell cycle. The APC/C complex acts by mediating ubiquitination and subsequent degradation of target proteins: it mainly mediates the formation of 'Lys-11'-linked polyubiquitin chains and, to a lower extent, the formation of 'Lys-48'- and 'Lys-63'-linked polyubiquitin chains. The APC/C complex catalyzes assembly of branched 'Lys-11'-/'Lys-48'-linked branched ubiquitin chains on target proteins. May recruit the E2 ubiquitin-conjugating enzymes to the complex. The sequence is that of Anaphase-promoting complex subunit 11 (ANAPC11) from Bos taurus (Bovine).